We begin with the raw amino-acid sequence, 152 residues long: Large ribosomal subunit protein bL9 (152 aa).

The protein belongs to the bacterial ribosomal protein bL9 family.

Its function is as follows. Binds to the 23S rRNA. This chain is Large ribosomal subunit protein bL9, found in Synechococcus sp. (strain CC9311).